The sequence spans 465 residues: E3 ubiquitin-protein ligase parkin (465 aa).

A Ubiquitin-like domain is found at 1–76 (MIVFVRFNSS…VHIVQRPWRK (76 aa)). Ser65 bears the Phosphoserine; by PINK1 mark. The disordered stretch occupies residues 77 to 99 (GQEMNATGGDDPRNAAGGCEREP). The tract at residues 77–237 (GQEMNATGGD…LIATNSRNIT (161 aa)) is necessary for PINK1-dependent localization to mitochondria. The segment at 141–225 (SIYNSFYVYC…PTSDKETSVA (85 aa)) adopts an RING-type 0; atypical zinc-finger fold. A Phosphothreonine; by PINK1 modification is found at Thr175. Residues 204–238 (TSAEFFFKCGAHPTSDKETSVALHLIATNSRNITC) form an SYT11 binding 1 region. Phosphothreonine is present on Thr217. Positions 234-465 (RNITCITCTD…VCMGDHWFDV (232 aa)) are TRIAD supradomain. Zn(2+) contacts are provided by Cys238, Cys241, Cys253, His257, Cys260, Cys263, Cys289, Cys293, Cys332, and Cys337. Residues 238 to 293 (CITCTDVRSPVLVFQCNSRHVICLDCFHLYCVTRLNDRQFVHDPQLGYSLPCVAGC) form an RING-type 1 zinc finger. An SYT11 binding 2 region spans residues 257–293 (HVICLDCFHLYCVTRLNDRQFVHDPQLGYSLPCVAGC). Residues 313–377 (NRYQQYGAEE…CKEAYHEGEC (65 aa)) form an IBR-type zinc finger. Lys349 participates in a covalent cross-link: Glycyl lysine isopeptide (Lys-Gly) (interchain with G-Cter in ISG15). Zn(2+) is bound by residues Cys352, Cys360, Cys365, and Cys368. Lys369 is covalently cross-linked (Glycyl lysine isopeptide (Lys-Gly) (interchain with G-Cter in ISG15)). Residues His373 and Cys377 each coordinate Zn(2+). Residues 378–410 (SAVFEASGTTTQAYRVDERAAEQARWEAASKET) are REP. Residues Cys418 and Cys421 each contribute to the Zn(2+) site. An RING-type 2; atypical zinc finger spans residues 418-449 (CPRCHVPVEKNGGCMHMKCPQPQCRLEWCWNC). Cys431 is a catalytic residue. Zn(2+) is bound by residues Cys436, Cys441, Cys446, Cys449, Cys457, and His461.

Belongs to the RBR family. Parkin subfamily. As to quaternary structure, forms an E3 ubiquitin ligase complex with UBE2L3 or UBE2L6. Mediates 'Lys-63'-linked polyubiquitination by associating with UBE2V1. Part of a SCF-like complex, consisting of PRKN, CUL1 and FBXW7. Interacts with SNCAIP. Binds to the C2A and C2B domains of SYT11. Interacts and regulates the turnover of SEPTIN5. Part of a complex, including STUB1, HSP70 and GPR37. The amount of STUB1 in the complex increases during ER stress. STUB1 promotes the dissociation of HSP70 from PRKN and GPR37, thus facilitating PRKN-mediated GPR37 ubiquitination. HSP70 transiently associates with unfolded GPR37 and inhibits the E3 activity of PRKN, whereas, STUB1 enhances the E3 activity of PRKN through promotion of dissociation of HSP70 from PRKN-GPR37 complexes. Interacts with PSMD4 and PACRG. Interacts with LRRK2. Interacts with RANBP2. Interacts with SUMO1 but not SUMO2, which promotes nuclear localization and autoubiquitination. Interacts (via first RING-type domain) with AIMP2 (via N-terminus). Interacts with PSMA7 and RNF41. Interacts with PINK1. Forms a complex with PINK1 and PARK7. Interacts with CHPF, the interaction with isoform 2 may facilitate PRKN transport into the mitochondria. Interacts with MFN2 (phosphorylated), promotes PRKN localization in dysfunctional depolarized mitochondria. Interacts with FBXO7; this promotes translocation to dysfunctional depolarized mitochondria. Interacts with ZNF746. Interacts with heat shock protein 70 family members, including HSPA1L, HSPA1A and HSPA8; interaction HSPA1L promotes translocation to damaged mitochondria. Interacts with BAG4 and, to a lesser extent, BAG5; interaction with BAG4 inhibits translocation to damaged mitochondria. Forms a complex with PRKN and PARK7. Interacts with AMBRA1. Post-translationally, ISGylated. Conjugated to ubiquitin-like protein ISG15 upon IFN-beta stimulation. ISGylation positively regulates its E3 ligase activity. Auto-ubiquitinates in an E2-dependent manner leading to its own degradation. Also polyubiquitinated by RNF41 for proteasomal degradation. In terms of processing, S-nitrosylated. The inhibition of PRKN ubiquitin E3 ligase activity by S-nitrosylation could contribute to the degenerative process in PD by impairing the ubiquitination of PRKN substrates. Post-translationally, phosphorylated. Activation requires phosphorylation at Ser-65 by PINK1 and binding to PINK1 phosphorylated ubiquitin. Phosphorylation at Thr-175 by PINK1 and at Thr-217 is important for mitochondrial localization. Highly expressed in the brain including the substantia nigra. Expressed in heart, testis and skeletal muscle. Expression is down-regulated or absent in tumor biopsies, and absent in the brain of PARK2 patients. Overexpression protects dopamine neurons from kainate-mediated apoptosis. Found in serum (at protein level).

Its subcellular location is the cytoplasm. The protein localises to the cytosol. It is found in the nucleus. The protein resides in the endoplasmic reticulum. It localises to the mitochondrion. Its subcellular location is the mitochondrion outer membrane. The protein localises to the cell projection. It is found in the neuron projection. The protein resides in the postsynaptic density. It localises to the presynapse. The catalysed reaction is [E2 ubiquitin-conjugating enzyme]-S-ubiquitinyl-L-cysteine + [acceptor protein]-L-lysine = [E2 ubiquitin-conjugating enzyme]-L-cysteine + [acceptor protein]-N(6)-ubiquitinyl-L-lysine.. It functions in the pathway protein modification; protein ubiquitination. Its activity is regulated as follows. In the autoinhibited state the side chain of Phe-463 inserts into a hydrophobic groove in RING-0, occluding the ubiquitin acceptor site Cys-431, whereas the REP repressor element binds RING-1 and blocks its E2-binding site. Activation of PRKN requires 2 steps: (1) phosphorylation at Ser-65 by PINK1 and (2) binding to phosphorylated ubiquitin, leading to unlock repression of the catalytic Cys-431 by the RING-0 region via an allosteric mechanism and converting PRKN to its fully-active form. According to another report, phosphorylation at Ser-65 by PINK1 is not essential for activation and only binding to phosphorylated ubiquitin is essential to unlock repression. In addition, ISG15 conjugation positively regulates its ubiquitin E3 ligase activity by suppressing the intramolecular interaction that maintains its autoinhibited conformation. Functionally, functions within a multiprotein E3 ubiquitin ligase complex, catalyzing the covalent attachment of ubiquitin moieties onto substrate proteins. Substrates include SYT11 and VDAC1. Other substrates are BCL2, CCNE1, GPR37, RHOT1/MIRO1, MFN1, MFN2, STUB1, SNCAIP, SEPTIN5, TOMM20, USP30, ZNF746, MIRO1 and AIMP2. Mediates monoubiquitination as well as 'Lys-6', 'Lys-11', 'Lys-48'-linked and 'Lys-63'-linked polyubiquitination of substrates depending on the context. Participates in the removal and/or detoxification of abnormally folded or damaged protein by mediating 'Lys-63'-linked polyubiquitination of misfolded proteins such as PARK7: 'Lys-63'-linked polyubiquitinated misfolded proteins are then recognized by HDAC6, leading to their recruitment to aggresomes, followed by degradation. Mediates 'Lys-63'-linked polyubiquitination of a 22 kDa O-linked glycosylated isoform of SNCAIP, possibly playing a role in Lewy-body formation. Mediates monoubiquitination of BCL2, thereby acting as a positive regulator of autophagy. Protects against mitochondrial dysfunction during cellular stress, by acting downstream of PINK1 to coordinate mitochondrial quality control mechanisms that remove and replace dysfunctional mitochondrial components. Depending on the severity of mitochondrial damage and/or dysfunction, activity ranges from preventing apoptosis and stimulating mitochondrial biogenesis to regulating mitochondrial dynamics and eliminating severely damaged mitochondria via mitophagy. Activation and recruitment onto the outer membrane of damaged/dysfunctional mitochondria (OMM) requires PINK1-mediated phosphorylation of both PRKN and ubiquitin. After mitochondrial damage, functions with PINK1 to mediate the decision between mitophagy or preventing apoptosis by inducing either the poly- or monoubiquitination of VDAC1, respectively; polyubiquitination of VDAC1 promotes mitophagy, while monoubiquitination of VDAC1 decreases mitochondrial calcium influx which ultimately inhibits apoptosis. When cellular stress results in irreversible mitochondrial damage, promotes the autophagic degradation of dysfunctional depolarized mitochondria (mitophagy) by promoting the ubiquitination of mitochondrial proteins such as TOMM20, RHOT1/MIRO1, MFN1 and USP30. Preferentially assembles 'Lys-6'-, 'Lys-11'- and 'Lys-63'-linked polyubiquitin chains, leading to mitophagy. The PINK1-PRKN pathway also promotes fission of damaged mitochondria by PINK1-mediated phosphorylation which promotes the PRKN-dependent degradation of mitochondrial proteins involved in fission such as MFN2. This prevents the refusion of unhealthy mitochondria with the mitochondrial network or initiates mitochondrial fragmentation facilitating their later engulfment by autophagosomes. Regulates motility of damaged mitochondria via the ubiquitination and subsequent degradation of MIRO1 and MIRO2; in motor neurons, this likely inhibits mitochondrial intracellular anterograde transport along the axons which probably increases the chance of the mitochondria undergoing mitophagy in the soma. Involved in mitochondrial biogenesis via the 'Lys-48'-linked polyubiquitination of transcriptional repressor ZNF746/PARIS which leads to its subsequent proteasomal degradation and allows activation of the transcription factor PPARGC1A. Limits the production of reactive oxygen species (ROS). Regulates cyclin-E during neuronal apoptosis. In collaboration with CHPF isoform 2, may enhance cell viability and protect cells from oxidative stress. Independently of its ubiquitin ligase activity, protects from apoptosis by the transcriptional repression of p53/TP53. May protect neurons against alpha synuclein toxicity, proteasomal dysfunction, GPR37 accumulation, and kainate-induced excitotoxicity. May play a role in controlling neurotransmitter trafficking at the presynaptic terminal and in calcium-dependent exocytosis. May represent a tumor suppressor gene. The protein is E3 ubiquitin-protein ligase parkin of Homo sapiens (Human).